Consider the following 537-residue polypeptide: MEDFLRGMQQSTLTTSVLFATPTSIPIIAAAQEALRDTLQQPTSLQRAAAAVATSTSSDNVQLKSSNDSTINGVVIGLLSSFGSAILIAFIFLIVYFFKYTSSGRILLDRIGRPGEYDDEQAFAKEEAEALEEMDDLQRTEYLRAKAFVQSNPPDSLPTDISLSQYLAIQEKGVSAWEFEPELEIANCFVEARTEIEFFDSECCTLTNLPVPKQNEVYYWESKIYDKPENTLISIGVATKPYPLFRLPGWHKYSVAYTSTGHRRYNQPFSGPVYGPQYVQGDVIGVGYRPRTGTIFFTRNGKKLEDVAHGLKSQNLFPAVGANGPCTVHVNFGQSGFVFIEANVKKWGLAPMTGSLAPPPPYGSEQGSILLEAGREGAQSSNGHYQPDPRHGRTRSGNFRHGPPTSPGPIRSPTDISLAQLTHFPSHEEPGEASNSSTPAPTGGVTQQSGLGVHDNAQPPPEYTSPLPSAAGSPRGSTDSERTPMLRRKTTPPPIPSYNDAVAQRNRSHSHRDRSGGRRERSDSHRARQGDGNPSQS.

At 1–73 (MEDFLRGMQQ…KSSNDSTING (73 aa)) the chain is on the cytoplasmic side. Residues 74 to 94 (VVIGLLSSFGSAILIAFIFLI) traverse the membrane as a helical; Signal-anchor for type II membrane protein segment. The Lumenal portion of the chain corresponds to 95–537 (VYFFKYTSSG…RQGDGNPSQS (443 aa)). In terms of domain architecture, B30.2/SPRY spans 141–337 (EYLRAKAFVQ…VHVNFGQSGF (197 aa)). Disordered regions lie at residues 375–414 (REGA…RSPT) and 426–537 (SHEE…PSQS). Residues 433 to 450 (ASNSSTPAPTGGVTQQSG) are compositionally biased toward polar residues. Asparagine 435 and asparagine 506 each carry an N-linked (GlcNAc...) asparagine glycan. Residues 513 to 529 (DRSGGRRERSDSHRARQ) show a composition bias toward basic and acidic residues.

The protein belongs to the SSH4 family.

The protein resides in the vacuole membrane. Its subcellular location is the endosome membrane. Components of the endosome-vacuole trafficking pathway that regulates nutrient transport. May be involved in processes which determine whether plasma membrane proteins are degraded or routed to the plasma membrane. The polypeptide is Protein ssh4 (ssh4) (Botryotinia fuckeliana (strain B05.10) (Noble rot fungus)).